The following is a 228-amino-acid chain: Cytidylate kinase (228 aa).

17–25 (GPTASGKGT) contacts ATP.

The protein belongs to the cytidylate kinase family. Type 1 subfamily.

It is found in the cytoplasm. The enzyme catalyses CMP + ATP = CDP + ADP. It carries out the reaction dCMP + ATP = dCDP + ADP. This chain is Cytidylate kinase, found in Burkholderia cenocepacia (strain HI2424).